Reading from the N-terminus, the 329-residue chain is Cathepsin K (329 aa).

Residues 1–15 form the signal peptide; sequence MWGLTVLLLPVVSFA. The propeptide at 16 to 114 is activation peptide; it reads LYPEEILDTQ…TLYIPDWEGR (99 aa). An N-linked (GlcNAc...) asparagine glycan is attached at Asn103. 3 disulfide bridges follow: Cys136–Cys177, Cys170–Cys210, and Cys269–Cys318. Residue Cys139 is part of the active site. Active-site residues include His276 and Asn296.

Belongs to the peptidase C1 family.

It is found in the lysosome. The protein resides in the secreted. It localises to the apical cell membrane. The catalysed reaction is Broad proteolytic activity. With small-molecule substrates and inhibitors, the major determinant of specificity is P2, which is preferably Leu, Met &gt; Phe, and not Arg.. Its function is as follows. Thiol protease involved in osteoclastic bone resorption and may participate partially in the disorder of bone remodeling. Displays potent endoprotease activity against fibrinogen at acid pH. May play an important role in extracellular matrix degradation. Involved in the release of thyroid hormone thyroxine (T4) by limited proteolysis of TG/thyroglobulin in the thyroid follicle lumen. The polypeptide is Cathepsin K (CTSK) (Bos taurus (Bovine)).